We begin with the raw amino-acid sequence, 305 residues long: tRNA dimethylallyltransferase (305 aa).

14 to 21 (GPTTSGKT) is a binding site for ATP. Position 16–21 (16–21 (TTSGKT)) interacts with substrate. Interaction with substrate tRNA regions lie at residues 39 to 42 (DSAL), 163 to 167 (QRITR), and 243 to 248 (RCVGYR).

It belongs to the IPP transferase family. As to quaternary structure, monomer. Mg(2+) is required as a cofactor.

It catalyses the reaction adenosine(37) in tRNA + dimethylallyl diphosphate = N(6)-dimethylallyladenosine(37) in tRNA + diphosphate. Functionally, catalyzes the transfer of a dimethylallyl group onto the adenine at position 37 in tRNAs that read codons beginning with uridine, leading to the formation of N6-(dimethylallyl)adenosine (i(6)A). This Ruthia magnifica subsp. Calyptogena magnifica protein is tRNA dimethylallyltransferase.